The sequence spans 130 residues: Small ribosomal subunit protein uS11c (130 aa).

It belongs to the universal ribosomal protein uS11 family. As to quaternary structure, part of the 30S ribosomal subunit.

It localises to the plastid. Its subcellular location is the chloroplast. This is Small ribosomal subunit protein uS11c from Angiopteris evecta (Mule's foot fern).